The chain runs to 434 residues: Serine hydroxymethyltransferase (434 aa).

(6S)-5,6,7,8-tetrahydrofolate contacts are provided by residues L133 and 137–139 (GHL). K242 is modified (N6-(pyridoxal phosphate)lysine).

It belongs to the SHMT family. Homodimer. It depends on pyridoxal 5'-phosphate as a cofactor.

It localises to the cytoplasm. The enzyme catalyses (6R)-5,10-methylene-5,6,7,8-tetrahydrofolate + glycine + H2O = (6S)-5,6,7,8-tetrahydrofolate + L-serine. The protein operates within one-carbon metabolism; tetrahydrofolate interconversion. It functions in the pathway amino-acid biosynthesis; glycine biosynthesis; glycine from L-serine: step 1/1. Catalyzes the reversible interconversion of serine and glycine with tetrahydrofolate (THF) serving as the one-carbon carrier. This reaction serves as the major source of one-carbon groups required for the biosynthesis of purines, thymidylate, methionine, and other important biomolecules. Also exhibits THF-independent aldolase activity toward beta-hydroxyamino acids, producing glycine and aldehydes, via a retro-aldol mechanism. The sequence is that of Serine hydroxymethyltransferase from Methylorubrum populi (strain ATCC BAA-705 / NCIMB 13946 / BJ001) (Methylobacterium populi).